The following is a 122-amino-acid chain: Large ribosomal subunit protein uL14 (122 aa).

The protein belongs to the universal ribosomal protein uL14 family. In terms of assembly, part of the 50S ribosomal subunit. Forms a cluster with proteins L3 and L19. In the 70S ribosome, L14 and L19 interact and together make contacts with the 16S rRNA in bridges B5 and B8.

In terms of biological role, binds to 23S rRNA. Forms part of two intersubunit bridges in the 70S ribosome. The polypeptide is Large ribosomal subunit protein uL14 (Cellvibrio japonicus (strain Ueda107) (Pseudomonas fluorescens subsp. cellulosa)).